Reading from the N-terminus, the 239-residue chain is tRNA (guanine-N(7)-)-methyltransferase (239 aa).

The S-adenosyl-L-methionine site is built by glutamate 69, glutamate 94, aspartate 121, and aspartate 144. The active site involves aspartate 144. Position 148 (lysine 148) interacts with substrate. Residues 150–155 (RHNKRR) are interaction with RNA. Residues aspartate 180 and 217–220 (TKFE) each bind substrate.

Belongs to the class I-like SAM-binding methyltransferase superfamily. TrmB family. Monomer.

It catalyses the reaction guanosine(46) in tRNA + S-adenosyl-L-methionine = N(7)-methylguanosine(46) in tRNA + S-adenosyl-L-homocysteine. Its pathway is tRNA modification; N(7)-methylguanine-tRNA biosynthesis. Catalyzes the formation of N(7)-methylguanine at position 46 (m7G46) in tRNA. The sequence is that of tRNA (guanine-N(7)-)-methyltransferase from Salmonella choleraesuis (strain SC-B67).